Here is a 953-residue protein sequence, read N- to C-terminus: Nonsense-mediated mRNA decay factor SMG8 (953 aa).

2 disordered regions span residues 571–604 and 629–653; these read AQDA…CSQP and PCFD…ESNN. Residues 574–586 are compositionally biased toward acidic residues; that stretch reads AELDPDEEDEELP. Over residues 595 to 604 the composition is skewed to polar residues; sequence ITQSNGCSQP. Residues 634–653 show a composition bias toward low complexity; it reads SSSSEAESTCSGTSSEESNN.

Belongs to the SMG8 family.

Functionally, involved in nonsense-mediated decay (NMD) of mRNAs containing premature stop codons. Probable component of kinase complex containing nonC and recruited to stalled ribosomes. The chain is Nonsense-mediated mRNA decay factor SMG8 from Drosophila persimilis (Fruit fly).